Here is a 297-residue protein sequence, read N- to C-terminus: Phosphoribosylaminoimidazole-succinocarboxamide synthase (297 aa).

It belongs to the SAICAR synthetase family.

The enzyme catalyses 5-amino-1-(5-phospho-D-ribosyl)imidazole-4-carboxylate + L-aspartate + ATP = (2S)-2-[5-amino-1-(5-phospho-beta-D-ribosyl)imidazole-4-carboxamido]succinate + ADP + phosphate + 2 H(+). It participates in purine metabolism; IMP biosynthesis via de novo pathway; 5-amino-1-(5-phospho-D-ribosyl)imidazole-4-carboxamide from 5-amino-1-(5-phospho-D-ribosyl)imidazole-4-carboxylate: step 1/2. The polypeptide is Phosphoribosylaminoimidazole-succinocarboxamide synthase (Corynebacterium urealyticum (strain ATCC 43042 / DSM 7109)).